We begin with the raw amino-acid sequence, 202 residues long: ATP-dependent Clp protease proteolytic subunit (202 aa).

Residue serine 98 is the Nucleophile of the active site. Residue histidine 123 is part of the active site.

The protein belongs to the peptidase S14 family. As to quaternary structure, fourteen ClpP subunits assemble into 2 heptameric rings which stack back to back to give a disk-like structure with a central cavity, resembling the structure of eukaryotic proteasomes.

The protein localises to the cytoplasm. The catalysed reaction is Hydrolysis of proteins to small peptides in the presence of ATP and magnesium. alpha-casein is the usual test substrate. In the absence of ATP, only oligopeptides shorter than five residues are hydrolyzed (such as succinyl-Leu-Tyr-|-NHMec, and Leu-Tyr-Leu-|-Tyr-Trp, in which cleavage of the -Tyr-|-Leu- and -Tyr-|-Trp bonds also occurs).. Functionally, cleaves peptides in various proteins in a process that requires ATP hydrolysis. Has a chymotrypsin-like activity. Plays a major role in the degradation of misfolded proteins. This Syntrophobacter fumaroxidans (strain DSM 10017 / MPOB) protein is ATP-dependent Clp protease proteolytic subunit.